The chain runs to 371 residues: Cytochrome b (371 aa).

The next 4 membrane-spanning stretches (helical) occupy residues 25–45 (FGSM…FLAV), 69–90 (WMMQ…YIHI), 105–125 (WLSG…GYVL), and 170–190 (FFAL…LHIM). 2 residues coordinate heme b: His75 and His89. Heme b contacts are provided by His174 and His188. His193 is a binding site for a ubiquinone. Transmembrane regions (helical) follow at residues 218-238 (YKDL…VSFL), 280-300 (LGGA…PFTH), 312-332 (IMQL…WAAT), and 339-358 (FTMI…IMNP).

This sequence belongs to the cytochrome b family. The cytochrome bc1 complex contains 3 respiratory subunits (MT-CYB, CYC1 and UQCRFS1), 2 core proteins (UQCRC1 and UQCRC2) and probably 6 low-molecular weight proteins. It depends on heme b as a cofactor.

It localises to the mitochondrion inner membrane. Component of the ubiquinol-cytochrome c reductase complex (complex III or cytochrome b-c1 complex) that is part of the mitochondrial respiratory chain. The b-c1 complex mediates electron transfer from ubiquinol to cytochrome c. Contributes to the generation of a proton gradient across the mitochondrial membrane that is then used for ATP synthesis. The protein is Cytochrome b (MT-CYB) of Eryx miliaris (Desert sand boa).